The chain runs to 663 residues: LEAF RUST 10 DISEASE-RESISTANCE LOCUS RECEPTOR-LIKE PROTEIN KINASE-like 1.4 (663 aa).

An N-terminal signal peptide occupies residues 1-25; it reads MYYPLSSSLMFFILFSLFYHLPCES. At 26–241 the chain is on the extracellular side; sequence SKCESLFQCG…TSLSIGAKAG (216 aa). N-linked (GlcNAc...) asparagine glycans are attached at residues Asn36, Asn64, Asn106, Asn137, and Asn208. A helical transmembrane segment spans residues 242 to 262; sequence IAVASVSGLAILLLAGLFLCI. The Cytoplasmic portion of the chain corresponds to 263–663; that stretch reads RRRRKTQDAQ…TSSSDTAASL (401 aa). Positions 282–304 are disordered; it reads SYSSRDTSRNPTSTTISSSSNHS. The segment covering 290-304 has biased composition (low complexity); the sequence is RNPTSTTISSSSNHS. Residues 334–609 form the Protein kinase domain; that stretch reads ENFSRELGDG…DEIVEILRGI (276 aa). Residues 340–348 and Lys362 each bind ATP; that span reads LGDGGFGTV. The Proton acceptor role is filled by Asp458. The segment at 637-663 is disordered; that stretch reads LLRNSVPPPISPETDKWTSSSDTAASL. The span at 653–663 shows a compositional bias: polar residues; sequence WTSSSDTAASL.

Belongs to the protein kinase superfamily. Ser/Thr protein kinase family.

It localises to the cell membrane. It carries out the reaction L-seryl-[protein] + ATP = O-phospho-L-seryl-[protein] + ADP + H(+). It catalyses the reaction L-threonyl-[protein] + ATP = O-phospho-L-threonyl-[protein] + ADP + H(+). This Arabidopsis thaliana (Mouse-ear cress) protein is LEAF RUST 10 DISEASE-RESISTANCE LOCUS RECEPTOR-LIKE PROTEIN KINASE-like 1.4.